Reading from the N-terminus, the 277-residue chain is tRNA uridine(34) hydroxylase (277 aa).

The 96-residue stretch at 126-221 folds into the Rhodanese domain; the sequence is SSPDVHVIDT…YLETVRGDDS (96 aa). Catalysis depends on cysteine 181, which acts as the Cysteine persulfide intermediate.

This sequence belongs to the TrhO family.

It carries out the reaction uridine(34) in tRNA + AH2 + O2 = 5-hydroxyuridine(34) in tRNA + A + H2O. Catalyzes oxygen-dependent 5-hydroxyuridine (ho5U) modification at position 34 in tRNAs. In Anaplasma marginale (strain Florida), this protein is tRNA uridine(34) hydroxylase.